The primary structure comprises 435 residues: 5-hydroxybenzimidazole synthase (435 aa).

Residues M95, Y124, H163, 186-188 (SKG), 227-230 (NGLR), and E266 each bind substrate. H270 contributes to the Zn(2+) binding site. Y293 contacts substrate. Residue H334 coordinates Zn(2+). The [4Fe-4S] cluster site is built by C410, C413, and C417.

Belongs to the ThiC family. 5-hydroxybenzimidazole synthase subfamily. As to quaternary structure, homodimer. [4Fe-4S] cluster is required as a cofactor.

It carries out the reaction 5-amino-1-(5-phospho-beta-D-ribosyl)imidazole + AH2 + S-adenosyl-L-methionine = 5-hydroxybenzimidazole + 5'-deoxyadenosine + formate + L-methionine + A + NH4(+) + phosphate + 2 H(+). In terms of biological role, catalyzes the conversion of aminoimidazole ribotide (AIR) to 5-hydroxybenzimidazole (5-HBI) in a radical S-adenosyl-L-methionine (SAM)-dependent reaction. Is thus involved in the anaerobic biosynthesis of the benzimidazole lower axial ligand of the cobamide produced by G.metallireducens. The polypeptide is 5-hydroxybenzimidazole synthase (Geobacter metallireducens (strain ATCC 53774 / DSM 7210 / GS-15)).